We begin with the raw amino-acid sequence, 849 residues long: ATP-binding cassette sub-family B member 6 (849 aa).

The Lumenal portion of the chain corresponds to 1–25 (MVRLGSYCEHNGSISQAWLDSGLSP). Residues 1-195 (MVRLGSYCEH…TLFLFVLGIR (195 aa)) form a required for the lysosomal targeting region. The segment at 1-227 (MVRLGSYCEH…SQPLLRDPNQ (227 aa)) is required for ATPase activity. The cysteines at positions 8 and 26 are disulfide-linked. N-linked (GlcNAc...) asparagine glycosylation occurs at asparagine 11. The chain crosses the membrane as a helical span at residues 26–46 (CFYFTLVPSVLLSFSFLLGAL). Residues 47–72 (QSALYARHSTTMEPKYIPRSRLYRLQ) are Cytoplasmic-facing. The chain crosses the membrane as a helical span at residues 73–93 (IVLSVVLILQSVIGLIWQAAG). At 94–98 (TDVVY) the chain is on the lumenal side. A helical membrane pass occupies residues 99–119 (GYMIVHGCLSVVAWGFSLWLL). Over 120 to 136 (HLERTRALVREKSRGHG) the chain is Cytoplasmic. A helical membrane pass occupies residues 137-157 (VVLLLFWALAFAAENLAFISW). The Lumenal segment spans residues 158 to 173 (QSPNWWWLSRDTVPQK). Residues 174 to 194 (VQFGLWITRYVCTLFLFVLGI) form a helical membrane-spanning segment. The Cytoplasmic segment spans residues 195–254 (RAPGRPRKPYIVLINEDERDVETSQPLLRDPNQSTWQGFKKKLLLVMQYIWPRRNIPLQL). The chain crosses the membrane as a helical span at residues 255 to 275 (LVALCMGLMGLERAINVFVPI). One can recognise an ABC transmembrane type-1 domain in the interval 256-547 (VALCMGLMGL…FGTYYRMIQS (292 aa)). The Lumenal segment spans residues 276-291 (YAKKIVDGLTEDSTWN). Residues 292 to 312 (ILAVTVCIYVLLKFLQGGGAG) traverse the membrane as a helical segment. The Cytoplasmic portion of the chain corresponds to 313–373 (TTGFLSNLRT…VDRGTSSINS (61 aa)). A helical transmembrane segment spans residues 374–394 (LLSYIVFSILPTIADIVIGIV). Residues 395-401 (YFTSSFN) are Lumenal-facing. Residues 402 to 422 (AWFGLIIFVCMTLYLTLTIII) traverse the membrane as a helical segment. Over 423–492 (TEWRTKYRRE…ASLAMLNQTQ (70 aa)) the chain is Cytoplasmic. The chain crosses the membrane as a helical span at residues 493-513 (NLIIGLGLLAGSLLCAYFVTE). At 514–520 (NKFKVGD) the chain is on the lumenal side. A helical membrane pass occupies residues 521 to 541 (YVLFGTYIIQLYTPLNWFGTY). Residues 542-849 (YRMIQSSFID…PPKATPRRGH (308 aa)) lie on the Cytoplasmic side of the membrane. The ABC transporter domain occupies 581–815 (IEFENVHFSY…GGVYAGMWQK (235 aa)). Residues tyrosine 590 and 614 to 625 (GPSGSGKSTIIR) each bind ATP. A compositionally biased stretch (low complexity) spans 814–825 (QKQQSGSESSSD). The interval 814 to 849 (QKQQSGSESSSDSDSERKDRTSEKLQPPKATPRRGH) is disordered. Residues 827–836 (DSERKDRTSE) are compositionally biased toward basic and acidic residues.

This sequence belongs to the ABC transporter superfamily. ABCB family. Heavy Metal importer (TC 3.A.1.210) subfamily. As to quaternary structure, homodimer. Post-translationally, N-glycosylated.

The protein localises to the cell membrane. Its subcellular location is the mitochondrion outer membrane. It localises to the endoplasmic reticulum membrane. The protein resides in the golgi apparatus membrane. It is found in the endosome membrane. The protein localises to the lysosome membrane. Its subcellular location is the late endosome membrane. It localises to the early endosome membrane. The protein resides in the secreted. It is found in the extracellular exosome. The protein localises to the mitochondrion. Its subcellular location is the endosome. It localises to the multivesicular body membrane. The protein resides in the melanosome membrane. The enzyme catalyses heme b(in) + ATP + H2O = heme b(out) + ADP + phosphate + H(+). It catalyses the reaction coproporphyrin III(in) + ATP + H2O = coproporphyrin III(out) + ADP + phosphate + H(+). The catalysed reaction is pheophorbide a(in) + ATP + H2O = pheophorbide a(out) + ADP + phosphate + H(+). It carries out the reaction coproporphyrinogen III(in) + ATP + H2O = coproporphyrinogen III(out) + ADP + phosphate + H(+). The enzyme catalyses protoporphyrin IX(in) + ATP + H2O = protoporphyrin IX(out) + ADP + phosphate + H(+). It catalyses the reaction coproporphyrin I(in) + ATP + H2O = coproporphyrin I(out) + ADP + phosphate + H(+). The catalysed reaction is uroporphyrin I(in) + ATP + H2O = uroporphyrin I(out) + ADP + phosphate + H(+). It carries out the reaction uroporphyrin III(in) + ATP + H2O = uroporphyrin III(out) + ADP + phosphate + H(+). ATP-dependent transporter that catalyzes the transport of a broad-spectrum of porphyrins from the cytoplasm to the extracellular space through the plasma membrane or into the vesicle lumen. May also function as an ATP-dependent importer of porphyrins from the cytoplasm into the mitochondria, in turn may participate in the de novo heme biosynthesis regulation and in the coordination of heme and iron homeostasis during phenylhydrazine stress. May also play a key role in the early steps of melanogenesis producing PMEL amyloid fibrils. In vitro, it confers to cells a resistance to toxic metal such as arsenic and cadmium and against chemotherapeutics agent such as 5-fluorouracil, SN-38 and vincristin. In addition may play a role in the transition metal homeostasis. The chain is ATP-binding cassette sub-family B member 6 (abcb6) from Xenopus tropicalis (Western clawed frog).